We begin with the raw amino-acid sequence, 410 residues long: Acetyltransferase aurG (410 aa).

3 helical membrane-spanning segments follow: residues 3-23 (LWLV…VVCF), 28-48 (SLVR…GLIL), and 59-79 (WSLV…VGLI). Over residues 90 to 99 (TSSRGGQPNA) the composition is skewed to polar residues. Residues 90–112 (TSSRGGQPNASLDLAGRKKPPSS) are disordered. A glycan (N-linked (GlcNAc...) asparagine) is linked at N98. 4 helical membrane passes run 157–177 (AMTL…GGDL), 219–239 (MYFS…MVGL), 300–320 (ILAT…YSYG), and 364–384 (IGYV…FFPL).

The protein belongs to the wax synthase family.

The protein resides in the membrane. It participates in polyketide biosynthesis. In terms of biological role, acetyltransferase; part of the gene cluster that mediates the biosynthesis of aurovertins, fungal polyketides that exhibit potent inhibition of adenosine triphosphate synthase. Tha biosynthesis starts with the HR-PKS aurA that selects propionate as the starter unit; synthesizes a hexa-ene chain through the repeated functions of the KR and DH domains in the first six iterations; selectively introduces three alpha-methyl substitutions at C4, C6, and C16 using the S-adensylmethionine-dependent cMET; and shuts off KR and DH in the last three iterations to afford a 1,3,5-triketo portion that can undergo intramolecular cyclization to yield the alpha-pyrone intermediate. AurE may act as a cyclase and enhances the rate of pyrone formation and product release of aurA. The methyltransferase aurB then methylates the C17 hydroxyl group. C17 methylation is required to initiate epoxidation by the downstream monooxygenase aurC. The monooxygenase aurC and the epoxide hydrolase aurD can iteratively transform the terminal triene portion of the methylated precursor into the dioxabicyclo[3.2.1]octane scaffold of aurovertin E. Epoxidation modifications of the precursor occur in two separate steps; bis-epoxidation of the two terminal olefins takes place first, followed by another epoxidation that occurs at C7-C8 after tetrahydrofuran formation. The O-acyltransferase aurG converts aurovertin E to aurovertin A. In Calcarisporium arbuscula (Dendryphion arbuscula), this protein is Acetyltransferase aurG.